A 218-amino-acid polypeptide reads, in one-letter code: Octanoyltransferase (218 aa).

Positions 34 to 209 (ETSRDELWIV…TFSQELGYQH (176 aa)) constitute a BPL/LPL catalytic domain. Substrate-binding positions include 73–80 (RGGQVTYH), 140–142 (SLG), and 153–155 (GLA). The active-site Acyl-thioester intermediate is Cys-171.

It belongs to the LipB family.

The protein localises to the cytoplasm. It carries out the reaction octanoyl-[ACP] + L-lysyl-[protein] = N(6)-octanoyl-L-lysyl-[protein] + holo-[ACP] + H(+). The protein operates within protein modification; protein lipoylation via endogenous pathway; protein N(6)-(lipoyl)lysine from octanoyl-[acyl-carrier-protein]: step 1/2. Its function is as follows. Catalyzes the transfer of endogenously produced octanoic acid from octanoyl-acyl-carrier-protein onto the lipoyl domains of lipoate-dependent enzymes. Lipoyl-ACP can also act as a substrate although octanoyl-ACP is likely to be the physiological substrate. The polypeptide is Octanoyltransferase (Shewanella loihica (strain ATCC BAA-1088 / PV-4)).